The chain runs to 112 residues: Putative RNase TTE0752 (112 aa).

Residues R74 and H79 contribute to the active site. The RX(4)HXY motif motif lies at 74-81; it reads RDKLIHEY. At Y81 the chain carries O-di-AMP-tyrosine.

Belongs to the HepT RNase toxin family. Homodimer, probably forms a complex with cognate antitoxin TTE0751. In terms of processing, modified by cognate antitoxin TTE0751; probably at least 2 successive AMPylation events occur on Tyr-81.

In terms of biological role, probable toxic component of a putative type VII toxin-antitoxin (TA) system, probably an RNase. Probably neutralized by cognate antitoxin TTE0751. Neutralization may be due to AMPylation by TTE0751. The sequence is that of Putative RNase TTE0752 from Caldanaerobacter subterraneus subsp. tengcongensis (strain DSM 15242 / JCM 11007 / NBRC 100824 / MB4) (Thermoanaerobacter tengcongensis).